Consider the following 237-residue polypeptide: Lectin ConGF (237 aa).

The Mn(2+) site is built by Glu8 and Asp10. Ca(2+)-binding residues include Asp10, Tyr12, Asn14, and Asp19. Position 14 (Asn14) interacts with a carbohydrate. Mn(2+)-binding residues include Asp19 and His24. Leu99, Tyr100, Asp208, and Arg228 together coordinate a carbohydrate.

Belongs to the leguminous lectin family. As to quaternary structure, homotetramer; dimer of dimers. Concanavalin A-like lectins of the Diocleinae subtribe undergo proteolytic processing referred to as circular permutation. The propeptide is split into an N-terminal and a C-terminal part, the gamma and beta chain, respectively. These are then religated in beta-gamma order to form the mature alpha chain. The beta and gamma chains can often be detected in cell extracts. Residues 1-118 of the mature chain, as displayed here, probably constitute the beta chain in the propeptide, residues 119-237 the gamma chain.

In terms of biological role, lectin. Induces paw edema in mice. Has a weak vasorelaxant effect on rat aorta. Has anti-inflammatory and anti-nociceptive effects. The chain is Lectin ConGF from Canavalia grandiflora (Jackbean).